A 952-amino-acid polypeptide reads, in one-letter code: Isoleucine--tRNA ligase (952 aa).

The 'HIGH' region signature appears at 58 to 68; that stretch reads PYANGDIHIGH. Glutamate 576 lines the L-isoleucyl-5'-AMP pocket. The 'KMSKS' region motif lies at 617 to 621; sequence KMSKS. Residue lysine 620 participates in ATP binding. Positions 915, 918, 935, and 938 each coordinate Zn(2+).

Belongs to the class-I aminoacyl-tRNA synthetase family. IleS type 1 subfamily. Monomer. Zn(2+) serves as cofactor.

It is found in the cytoplasm. It carries out the reaction tRNA(Ile) + L-isoleucine + ATP = L-isoleucyl-tRNA(Ile) + AMP + diphosphate. In terms of biological role, catalyzes the attachment of isoleucine to tRNA(Ile). As IleRS can inadvertently accommodate and process structurally similar amino acids such as valine, to avoid such errors it has two additional distinct tRNA(Ile)-dependent editing activities. One activity is designated as 'pretransfer' editing and involves the hydrolysis of activated Val-AMP. The other activity is designated 'posttransfer' editing and involves deacylation of mischarged Val-tRNA(Ile). The protein is Isoleucine--tRNA ligase of Aliivibrio fischeri (strain MJ11) (Vibrio fischeri).